The primary structure comprises 412 residues: Delta-aminolevulinic acid dehydratase, chloroplastic (412 aa).

Residues 1-48 (MASSIPNAPSAFNSQSYVGLRAPLRTFNFSSPQAAKIPRSQRLFVVRA) constitute a chloroplast transit peptide. A disordered region spans residues 68–101 (VRPRPAAPVGTPVVPSLPLHRRPRRNRKSPALRS). Positions 86 to 97 (LHRRPRRNRKSP) are enriched in basic residues. The Schiff-base intermediate with substrate role is filled by Lys280. The 5-aminolevulinate site is built by Arg290 and Lys302. Glu318 lines the Mg(2+) pocket. Lys333 functions as the Schiff-base intermediate with substrate in the catalytic mechanism. Positions 359 and 398 each coordinate 5-aminolevulinate.

Belongs to the ALAD family. As to quaternary structure, homooctamer. Mg(2+) is required as a cofactor. In terms of tissue distribution, leaves and root nodules.

The protein localises to the plastid. It is found in the chloroplast. It carries out the reaction 2 5-aminolevulinate = porphobilinogen + 2 H2O + H(+). It participates in porphyrin-containing compound metabolism; protoporphyrin-IX biosynthesis; coproporphyrinogen-III from 5-aminolevulinate: step 1/4. In terms of biological role, is committed to plant tetrapyrrole synthesis. Catalyzes an early step in the biosynthesis of tetrapyrroles. Binds two molecules of 5-aminolevulinate per subunit, each at a distinct site, and catalyzes their condensation to form porphobilinogen. The sequence is that of Delta-aminolevulinic acid dehydratase, chloroplastic (HEMB) from Glycine max (Soybean).